We begin with the raw amino-acid sequence, 340 residues long: Ketol-acid reductoisomerase (NADP(+)) (340 aa).

The region spanning 1-182 is the KARI N-terminal Rossmann domain; the sequence is MTVTMQYEKD…GSARVGLLET (182 aa). NADP(+) contacts are provided by residues 26–29, R49, S53, and 83–86; these read YGSQ and DEIQ. H108 is an active-site residue. An NADP(+)-binding site is contributed by G134. The KARI C-terminal knotted domain maps to 183 to 328; sequence TFKEETEEDL…AELRKAMPFV (146 aa). 4 residues coordinate Mg(2+): D191, E195, E227, and E231. S252 is a binding site for substrate.

The protein belongs to the ketol-acid reductoisomerase family. Mg(2+) serves as cofactor.

It catalyses the reaction (2R)-2,3-dihydroxy-3-methylbutanoate + NADP(+) = (2S)-2-acetolactate + NADPH + H(+). It carries out the reaction (2R,3R)-2,3-dihydroxy-3-methylpentanoate + NADP(+) = (S)-2-ethyl-2-hydroxy-3-oxobutanoate + NADPH + H(+). It participates in amino-acid biosynthesis; L-isoleucine biosynthesis; L-isoleucine from 2-oxobutanoate: step 2/4. Its pathway is amino-acid biosynthesis; L-valine biosynthesis; L-valine from pyruvate: step 2/4. Its function is as follows. Involved in the biosynthesis of branched-chain amino acids (BCAA). Catalyzes an alkyl-migration followed by a ketol-acid reduction of (S)-2-acetolactate (S2AL) to yield (R)-2,3-dihydroxy-isovalerate. In the isomerase reaction, S2AL is rearranged via a Mg-dependent methyl migration to produce 3-hydroxy-3-methyl-2-ketobutyrate (HMKB). In the reductase reaction, this 2-ketoacid undergoes a metal-dependent reduction by NADPH to yield (R)-2,3-dihydroxy-isovalerate. In Streptococcus suis (strain 98HAH33), this protein is Ketol-acid reductoisomerase (NADP(+)).